Consider the following 283-residue polypeptide: ATP phosphoribosyltransferase (283 aa).

This sequence belongs to the ATP phosphoribosyltransferase family. Long subfamily. Equilibrium between an active dimeric form, an inactive hexameric form and higher aggregates. Interconversion between the various forms is largely reversible and is influenced by the natural substrates and inhibitors of the enzyme. It depends on Mg(2+) as a cofactor.

It localises to the cytoplasm. The catalysed reaction is 1-(5-phospho-beta-D-ribosyl)-ATP + diphosphate = 5-phospho-alpha-D-ribose 1-diphosphate + ATP. The protein operates within amino-acid biosynthesis; L-histidine biosynthesis; L-histidine from 5-phospho-alpha-D-ribose 1-diphosphate: step 1/9. Feedback inhibited by histidine. Functionally, catalyzes the condensation of ATP and 5-phosphoribose 1-diphosphate to form N'-(5'-phosphoribosyl)-ATP (PR-ATP). Has a crucial role in the pathway because the rate of histidine biosynthesis seems to be controlled primarily by regulation of HisG enzymatic activity. In Mycobacterium sp. (strain JLS), this protein is ATP phosphoribosyltransferase.